The following is a 135-amino-acid chain: UPF0355 protein SAV0387 (135 aa).

Belongs to the UPF0355 family.

This Staphylococcus aureus (strain Mu50 / ATCC 700699) protein is UPF0355 protein SAV0387.